We begin with the raw amino-acid sequence, 234 residues long: MELLLLSNSTLPGKAWLEHALPLIANQLNGRRSAVFIPFAGVTQTWDEYTDKTAEVLAPLGINVTGIHRVADPLAAIEKAEIIIVGGGNTFQLMKESRERGLLAPMADRVKRGALYIGWSAGANLACPTIRTTNDMPIVDPNGFDALDLFPLQINPHFTNALPEGHKGETREQRIRELLVVAPELTVIGLPEGNWIQVSNGQAVPGGPNTTWVFKAGEEAVALEAVIAFNPWPH.

Residues Ser-120, Asp-135, and His-157 each act as charge relay system in the active site.

Belongs to the peptidase S51 family.

Its subcellular location is the cytoplasm. It carries out the reaction Dipeptidase E catalyzes the hydrolysis of dipeptides Asp-|-Xaa. It does not act on peptides with N-terminal Glu, Asn or Gln, nor does it cleave isoaspartyl peptides.. Hydrolyzes dipeptides containing N-terminal aspartate residues. May play a role in allowing the cell to use peptide aspartate to spare carbon otherwise required for the synthesis of the aspartate family of amino acids. This chain is Peptidase E, found in Salmonella gallinarum (strain 287/91 / NCTC 13346).